Here is a 443-residue protein sequence, read N- to C-terminus: Threonine/serine transporter TdcC (443 aa).

A run of 11 helical transmembrane segments spans residues 22-42, 44-64, 97-117, 140-160, 163-183, 207-227, 261-281, 311-331, 366-386, 389-409, and 423-443; these read TTWT…FFPI, AGFG…PIAF, GVVI…IYGV, FVAL…KDLM, VMSY…LSLI, ILIT…FSPI, MLMV…LSPA, FAIT…FKSF, LSMI…PNIL, IEAM…MYAI, and DNVF…YKLF.

This sequence belongs to the amino acid/polyamine transporter 2 family. SdaC/TdcC subfamily.

Its subcellular location is the cell inner membrane. It catalyses the reaction L-threonine(in) + H(+)(in) = L-threonine(out) + H(+)(out). The enzyme catalyses L-serine(in) + H(+)(in) = L-serine(out) + H(+)(out). Its function is as follows. Involved in the import of threonine and serine into the cell, with the concomitant import of a proton (symport system). This Shigella flexneri serotype 5b (strain 8401) protein is Threonine/serine transporter TdcC.